Here is a 442-residue protein sequence, read N- to C-terminus: UPF0489 protein C5orf22 homolog (442 aa).

Residues 175 to 208 (SSAKKPKLALEDSRNTASTNCDSSSEGLEKDTAT) are disordered. Polar residues predominate over residues 189 to 200 (NTASTNCDSSSE).

Belongs to the UPF0489 family.

In Pongo abelii (Sumatran orangutan), this protein is UPF0489 protein C5orf22 homolog.